The primary structure comprises 109 residues: Cell division protein ZapA (109 aa).

Residues 21 to 99 are a coiled coil; sequence PEQQDALNQA…IEQALLEQGR (79 aa).

The protein belongs to the ZapA family. Type 1 subfamily. As to quaternary structure, homodimer. Interacts with FtsZ.

The protein localises to the cytoplasm. Its function is as follows. Activator of cell division through the inhibition of FtsZ GTPase activity, therefore promoting FtsZ assembly into bundles of protofilaments necessary for the formation of the division Z ring. It is recruited early at mid-cell but it is not essential for cell division. The polypeptide is Cell division protein ZapA (Pectobacterium carotovorum subsp. carotovorum (strain PC1)).